Here is a 493-residue protein sequence, read N- to C-terminus: Glycerol kinase (493 aa).

Threonine 11 contacts ADP. Threonine 11, threonine 12, and serine 13 together coordinate ATP. Threonine 11 contributes to the sn-glycerol 3-phosphate binding site. Residue arginine 15 coordinates ADP. Residues arginine 80, glutamate 81, tyrosine 132, and aspartate 241 each coordinate sn-glycerol 3-phosphate. The glycerol site is built by arginine 80, glutamate 81, tyrosine 132, aspartate 241, and glutamine 242. Residues threonine 263 and glycine 306 each contribute to the ADP site. Residues threonine 263, glycine 306, glutamine 310, and glycine 408 each coordinate ATP. Glycine 408 lines the ADP pocket.

This sequence belongs to the FGGY kinase family.

It catalyses the reaction glycerol + ATP = sn-glycerol 3-phosphate + ADP + H(+). It functions in the pathway polyol metabolism; glycerol degradation via glycerol kinase pathway; sn-glycerol 3-phosphate from glycerol: step 1/1. Its activity is regulated as follows. Inhibited by fructose 1,6-bisphosphate (FBP). Its function is as follows. Key enzyme in the regulation of glycerol uptake and metabolism. Catalyzes the phosphorylation of glycerol to yield sn-glycerol 3-phosphate. The sequence is that of Glycerol kinase from Cereibacter sphaeroides (strain ATCC 17023 / DSM 158 / JCM 6121 / CCUG 31486 / LMG 2827 / NBRC 12203 / NCIMB 8253 / ATH 2.4.1.) (Rhodobacter sphaeroides).